Reading from the N-terminus, the 212-residue chain is Redox-sensing transcriptional repressor Rex (212 aa).

A DNA-binding region (H-T-H motif) is located at residues 17 to 56 (KYHRYLQELMENDIDRISSKELSEKIGFTASQIRQDLNCF). 91–96 (GAGNIG) is a binding site for NAD(+).

It belongs to the transcriptional regulatory Rex family. Homodimer.

The protein resides in the cytoplasm. In terms of biological role, modulates transcription in response to changes in cellular NADH/NAD(+) redox state. In Clostridium perfringens (strain SM101 / Type A), this protein is Redox-sensing transcriptional repressor Rex.